The primary structure comprises 227 residues: UPF0758 protein Pcar_0065 (227 aa).

In terms of domain architecture, MPN spans 105–227 (RYTSPQAVFA…YVSLADRGVL (123 aa)). Residues H176, H178, and D189 each coordinate Zn(2+). The JAMM motif signature appears at 176–189 (HNHPSGDPSPSRED).

The protein belongs to the UPF0758 family.

The chain is UPF0758 protein Pcar_0065 from Syntrophotalea carbinolica (strain DSM 2380 / NBRC 103641 / GraBd1) (Pelobacter carbinolicus).